Here is a 211-residue protein sequence, read N- to C-terminus: Beta-crystallin B3 (211 aa).

At Met1 the chain carries N-acetylmethionine. Ala2 carries the N-acetylalanine; in Beta-crystallin B3, N-terminally processed modification. The tract at residues 2–23 is N-terminal arm; sequence AEQHGAPEQAAASKSHGGLGGS. 2 consecutive Beta/gamma crystallin 'Greek key' domains span residues 24–63 and 64–108; these read YKVT…QVES and GPWL…RPLH. Residues 109-113 form a connecting peptide region; it reads IDGPD. Beta/gamma crystallin 'Greek key' domains are found at residues 114 to 155 and 156 to 198; these read HKLH…RVIN and GTWV…RRIR. Residues 200–211 form a C-terminal arm region; the sequence is QKWHKRGCFLSS.

Belongs to the beta/gamma-crystallin family. As to quaternary structure, homo/heterodimer, or complexes of higher-order. The structure of beta-crystallin oligomers seems to be stabilized through interactions between the N-terminal arms.

Crystallins are the dominant structural components of the vertebrate eye lens. The protein is Beta-crystallin B3 (Crybb3) of Rattus norvegicus (Rat).